The sequence spans 879 residues: Metabotropic glutamate receptor 3 (879 aa).

An N-terminal signal peptide occupies residues 1 to 22 (MKMLTRLQVLMLALFSKGFLVS). At 23–576 (LGDHNFMRRE…EDYIRWEDAW (554 aa)) the chain is on the extracellular side. An intrachain disulfide couples C57 to C99. Residues S151 and 172–174 (AST) each bind L-glutamate. The N-linked (GlcNAc...) asparagine glycan is linked to N209. An L-glutamate-binding site is contributed by Y222. Intrachain disulfides connect C240–C527, C361–C373, C412–C419, C509–C528, C513–C531, C534–C546, and C549–C562. Residue N292 is glycosylated (N-linked (GlcNAc...) asparagine). D301 contacts L-glutamate. K389 contributes to the L-glutamate binding site. N-linked (GlcNAc...) asparagine glycans are attached at residues N414 and N439. The chain crosses the membrane as a helical span at residues 577-599 (AIGPVTIACLGFMCTCIVITVFI). Topologically, residues 600 to 613 (KHNNTPLVKASGRE) are cytoplasmic. Residues 614–634 (LCYILLFGVSLSYCMTFFFIA) traverse the membrane as a helical segment. At 635–645 (KPSPVICALRR) the chain is on the extracellular side. A helical membrane pass occupies residues 646–664 (LGLGTSFAICYSALLTKTN). The Cytoplasmic portion of the chain corresponds to 665–688 (CIARIFDGVKNGAQRPKFISPSSQ). The chain crosses the membrane as a helical span at residues 689–709 (VFICLGLILVQIVMVSVWLIL). Topologically, residues 710-734 (ETPGTRRYTLPEKRETVILKCNVKD) are extracellular. Residues 735–756 (SSMLISLTYDVVLVILCTVYAF) traverse the membrane as a helical segment. The Cytoplasmic segment spans residues 757-769 (KTRKCPENFNEAK). The helical transmembrane segment at 770-792 (FIGFTMYTTCIIWLAFLPIFYVT) threads the bilayer. Residues 793–802 (SSDYRVQTTT) lie on the Extracellular side of the membrane. The helical transmembrane segment at 803 to 828 (MCISVSLSGFVVLGCLFAPKVHIVLF) threads the bilayer. Over 829–879 (QPQKNVVTHRLHLNRFSVSGTATTYSQSSASTYVPTVCNGREVLDSTTSSL) the chain is Cytoplasmic.

It belongs to the G-protein coupled receptor 3 family. In terms of assembly, interacts with TAMALIN.

It is found in the cell membrane. In terms of biological role, G-protein coupled receptor for glutamate. Ligand binding causes a conformation change that triggers signaling via guanine nucleotide-binding proteins (G proteins) and modulates the activity of down-stream effectors. Signaling inhibits adenylate cyclase activity. The sequence is that of Metabotropic glutamate receptor 3 (Grm3) from Mus musculus (Mouse).